The sequence spans 586 residues: SPbeta prophage-derived uncharacterized protein YorA (586 aa).

13 PbH1 repeats span residues 108 to 147, 148 to 170, 184 to 206, 207 to 235, 246 to 268, 288 to 313, 320 to 341, 364 to 384, 387 to 410, 411 to 432, 435 to 456, 481 to 504, and 505 to 531; these read AENV…HVHG, SKNV…WIAA, SKSV…ATNG, CEGL…DLEG, PYEL…TAHT, STDV…DSVG, GNRI…MIRG, AEDV…QIQV, SSDI…KVMD, SNDV…YCER, AVRI…YWDK, MYNI…HLIG, and GSEH…YLNG.

The polypeptide is SPbeta prophage-derived uncharacterized protein YorA (yorA) (Bacillus subtilis (strain 168)).